Consider the following 703-residue polypeptide: NADH-quinone oxidoreductase chain 12 (703 aa).

16 consecutive transmembrane segments (helical) span residues 4–24, 30–50, 79–99, 116–136, 138–158, 179–199, 224–244, 256–276, 290–310, 325–345, 346–366, 381–401, 415–435, 475–495, 580–600, and 679–699; these read FVLF…RAIG, YLTT…FLSF, LTAI…MYSL, ARFF…VTAD, LLQM…LIGF, GDFG…SVQF, ANLL…QLLL, TPVS…FLVC, NFIV…GLVQ, LGYM…FHLL, THAF…HAMH, IPLT…VGIP, AIIE…VIAA, LGVL…PFFG, VSPF…YIAN, and LFHY…WVMM.

The protein belongs to the complex I subunit 5 family. As to quaternary structure, NDH-1 is composed of at least 14 different subunits, Nqo1 to Nqo14. The complex has a L-shaped structure, with the hydrophobic arm (subunits Nqo7, Nqo8, Nqo10 to Nqo14) embedded in the inner membrane and the hydrophilic peripheral arm (subunits Nqo1 to Nqo6, Nqo9) protruding into the bacterial cytoplasm. The hydrophilic domain contains all the redox centers.

The protein resides in the cell inner membrane. It carries out the reaction a quinone + NADH + 5 H(+)(in) = a quinol + NAD(+) + 4 H(+)(out). In terms of biological role, NDH-1 shuttles electrons from NADH, via FMN and iron-sulfur (Fe-S) centers, to quinones in the respiratory chain. The immediate electron acceptor for the enzyme in this species is believed to be ubiquinone. Couples the redox reaction to proton translocation (for every two electrons transferred, four hydrogen ions are translocated across the cytoplasmic membrane), and thus conserves the redox energy in a proton gradient. The polypeptide is NADH-quinone oxidoreductase chain 12 (Paracoccus denitrificans).